Consider the following 287-residue polypeptide: Sulfofructosephosphate aldolase (287 aa).

Aspartate 82 functions as the Proton donor in the catalytic mechanism. Residues histidine 83 and histidine 180 each contribute to the Zn(2+) site. Glycine 181 serves as a coordination point for dihydroxyacetone phosphate. Histidine 208 serves as a coordination point for Zn(2+). Residues 209-211 (GGS) and 230-233 (NVDT) each bind dihydroxyacetone phosphate.

It belongs to the class II fructose-bisphosphate aldolase family. It depends on Zn(2+) as a cofactor.

The catalysed reaction is 6-deoxy-6-sulfo-D-fructose 1-phosphate = (2S)-3-sulfolactaldehyde + dihydroxyacetone phosphate. Part of the sulfo-EMP2 pathway, a D-sulfoquinovose degradation pathway that produces sulfolactate (SL). Cleaves 6-deoxy-6-sulfo-D-fructose 1-phosphate (SFP) to form dihydroxyacetone phosphate (DHAP) and 3-sulfolactaldehyde (SLA). The sequence is that of Sulfofructosephosphate aldolase from Alkalicoccus urumqiensis (Bacillus urumqiensis).